The sequence spans 171 residues: UPF0398 protein SPy_1647/M5005_Spy1353 (171 aa).

It belongs to the UPF0398 family.

The sequence is that of UPF0398 protein SPy_1647/M5005_Spy1353 from Streptococcus pyogenes serotype M1.